Consider the following 351-residue polypeptide: Glycerol-1-phosphate dehydrogenase [NAD(P)+] (351 aa).

Residues 98–102 and 120–123 contribute to the NAD(+) site; these read GSIID and TTAS. Substrate is bound at residue D125. S129 contacts NAD(+). Residue D172 coordinates substrate. Positions 172 and 252 each coordinate Zn(2+). Substrate is bound at residue H256. Residue H268 coordinates Zn(2+).

This sequence belongs to the glycerol-1-phosphate dehydrogenase family. Zn(2+) is required as a cofactor.

The protein localises to the cytoplasm. The enzyme catalyses sn-glycerol 1-phosphate + NAD(+) = dihydroxyacetone phosphate + NADH + H(+). It catalyses the reaction sn-glycerol 1-phosphate + NADP(+) = dihydroxyacetone phosphate + NADPH + H(+). The protein operates within membrane lipid metabolism; glycerophospholipid metabolism. Catalyzes the NAD(P)H-dependent reduction of dihydroxyacetonephosphate (DHAP or glycerone phosphate) to glycerol 1-phosphate (G1P). The G1P thus generated is used as the glycerophosphate backbone of phospholipids in the cellular membranes of Archaea. This chain is Glycerol-1-phosphate dehydrogenase [NAD(P)+], found in Thermococcus kodakarensis (strain ATCC BAA-918 / JCM 12380 / KOD1) (Pyrococcus kodakaraensis (strain KOD1)).